Reading from the N-terminus, the 391-residue chain is Pyruvate dehydrogenase E1 component subunit alpha type II, mitochondrial (391 aa).

Residues 1-17 (SNIFKGPTVGSSVVAMS) constitute a mitochondrion transit peptide. Residues His-83, Tyr-109, Arg-110, Gly-148, Gly-156, Val-158, Asp-187, Gly-188, Ala-189, Asn-216, and Tyr-218 each coordinate pyruvate. Thiamine diphosphate is bound by residues Tyr-109 and Arg-110. Residues Gly-156, Val-158, Asp-187, Gly-188, Ala-189, and Asn-216 each contribute to the thiamine diphosphate site. Asp-187 lines the Mg(2+) pocket. Residues Asn-216 and Tyr-218 each contribute to the Mg(2+) site. His-283 serves as a coordination point for thiamine diphosphate. Residues Ser-284 and Ser-291 each carry the phosphoserine modification.

As to quaternary structure, heterotetramer of two PDHA2 and two PDHB subunits. The heterotetramer interacts with DLAT, and is part of the multimeric pyruvate dehydrogenase complex that contains multiple copies of pyruvate dehydrogenase (E1), dihydrolipoamide acetyltransferase (DLAT, E2) and lipoamide dehydrogenase (DLD, E3). It depends on thiamine diphosphate as a cofactor. The cofactor is Mg(2+).

The protein localises to the mitochondrion matrix. The catalysed reaction is N(6)-[(R)-lipoyl]-L-lysyl-[protein] + pyruvate + H(+) = N(6)-[(R)-S(8)-acetyldihydrolipoyl]-L-lysyl-[protein] + CO2. Pyruvate dehydrogenase activity is inhibited by phosphorylation of PDHA2; it is reactivated by dephosphorylation. The pyruvate dehydrogenase complex catalyzes the overall conversion of pyruvate to acetyl-CoA and CO(2), and thereby links the glycolytic pathway to the tricarboxylic cycle. The polypeptide is Pyruvate dehydrogenase E1 component subunit alpha type II, mitochondrial (Ascaris suum (Pig roundworm)).